We begin with the raw amino-acid sequence, 541 residues long: AT-rich interactive domain-containing protein 3A (541 aa).

Residues 17–172 (RLQQELEARQ…KHPNPQAFPT (156 aa)) form a disordered region. Low complexity predominate over residues 55-73 (LKIQRAQAAALAAMRAAAA). Over residues 84 to 102 (SDEEEEDGESMASDEEDEK) the composition is skewed to acidic residues. Residues 103–112 (ERDGESERYP) show a composition bias toward basic and acidic residues. The span at 115–144 (GSEEEDLKGKWDEDDFEDEGEEDDYEDMEE) shows a compositional bias: acidic residues. The ARID domain occupies 212-304 (DPKRKEFLDD…YLYPYECEKR (93 aa)). The 95-residue stretch at 407 to 501 (AALEQLREKL…GVLFAQPPTS (95 aa)) folds into the REKLES domain. Positions 408–450 (ALEQLREKLESGEPPEKKMALGTEEQQRLQRAIQHNLLAMTAQ) are important for nuclear localization. Residues 452-473 (PMNIRINSQAEGRQDSAVNLTT) are homodimerization. Residues 497-504 (QPPTSASG) form an important for cytoplasmic localization region. The tract at residues 499–541 (PTSASGTSKGSSNRTGSIGGGSSTSQAAPPPAPSAPTSNNPSP) is disordered.

Homodimer.

It is found in the nucleus. Its subcellular location is the cytoplasm. Transcription factor required for smad1 and smad2-mediated responses to TGFbeta during mesoderm induction. This chain is AT-rich interactive domain-containing protein 3A (arid3a), found in Xenopus tropicalis (Western clawed frog).